The primary structure comprises 357 residues: Sorbitol dehydrogenase 2 (357 aa).

Position 43 (Cys43) interacts with Zn(2+). Residue Tyr49 coordinates substrate. 2 residues coordinate Zn(2+): His68 and Glu69. Glu154 is a binding site for substrate. NAD(+)-binding positions include Asp202, Lys207, 275-277 (VGM), and 299-301 (CFR). The substrate site is built by Arg301 and Tyr302.

This sequence belongs to the zinc-containing alcohol dehydrogenase family. In terms of assembly, homotetramer. Zn(2+) serves as cofactor.

The catalysed reaction is keto-D-fructose + NADH + H(+) = D-sorbitol + NAD(+). The enzyme catalyses xylitol + NAD(+) = D-xylulose + NADH + H(+). Functionally, polyol dehydrogenase that catalyzes the reversible NAD(+)-dependent oxidation of various sugar alcohols. Is active with D-sorbitol (D-glucitol) and xylitol as substrates, leading to the C2-oxidized product D-fructose and D-xylulose, respectively. The sequence is that of Sorbitol dehydrogenase 2 (SOR2) from Saccharomyces cerevisiae (strain ATCC 204508 / S288c) (Baker's yeast).